A 401-amino-acid polypeptide reads, in one-letter code: Alternative oxidase, mitochondrial (401 aa).

The interval 53–81 (KRASLSLQPSVREAEKSQGPVVGSEGRGV) is disordered. Residues 184-204 (LFRIILLESIAGVPGMVGGTL) traverse the membrane as a helical segment. 3 residues coordinate Fe cation: Glu191, Glu230, and His233. A helical transmembrane segment spans residues 249–269 (ALVLAAQGVFYNAFFLTYLIS). Glu281, Glu282, Glu335, and His338 together coordinate Fe cation.

It belongs to the alternative oxidase family. It depends on Fe cation as a cofactor.

It is found in the mitochondrion inner membrane. Catalyzes cyanide-resistant oxygen consumption. May increase respiration when the cytochrome respiratory pathway is restricted, or in response to low temperatures. This Cryptococcus neoformans var. grubii serotype A (strain H99 / ATCC 208821 / CBS 10515 / FGSC 9487) (Filobasidiella neoformans var. grubii) protein is Alternative oxidase, mitochondrial (AOX1).